The primary structure comprises 274 residues: Bis(5'-nucleosyl)-tetraphosphatase, symmetrical (274 aa).

Belongs to the Ap4A hydrolase family.

The catalysed reaction is P(1),P(4)-bis(5'-adenosyl) tetraphosphate + H2O = 2 ADP + 2 H(+). Functionally, hydrolyzes diadenosine 5',5'''-P1,P4-tetraphosphate to yield ADP. This Erwinia tasmaniensis (strain DSM 17950 / CFBP 7177 / CIP 109463 / NCPPB 4357 / Et1/99) protein is Bis(5'-nucleosyl)-tetraphosphatase, symmetrical.